The following is a 486-amino-acid chain: O-methyltransferase gedA (486 aa).

Residues G298 to G299, D321, S353 to F354, and R369 each bind S-adenosyl-L-methionine. Catalysis depends on H373, which acts as the Proton acceptor.

Belongs to the class I-like SAM-binding methyltransferase superfamily. Cation-independent O-methyltransferase family.

It carries out the reaction emodin + S-adenosyl-L-methionine = questin + S-adenosyl-L-homocysteine + H(+). Its pathway is secondary metabolite biosynthesis. O-methyltransferase; part of the gene cluster that mediates the biosynthesis of geodin, an intermediate in the biosynthesis of other natural products. The pathway begins with the synthesis of atrochrysone thioester by the polyketide synthase (PKS) gedC. The atrochrysone carboxyl ACP thioesterase gedB then breaks the thioester bond and releases the atrochrysone carboxylic acid from gedC. The atrochrysone carboxylic acid is then converted to atrochrysone which is further transformed into emodinanthrone. The next step is performed by the emodinanthrone oxygenase gedH that catalyzes the oxidation of emodinanthrone to emodin. Emodin O-methyltransferase encoded probably by gedA then catalyzes methylation of the 8-hydroxy group of emodin to form questin. Ring cleavage of questin by questin oxidase gedK leads to desmethylsulochrin via several intermediates including questin epoxide. Another methylation step probably catalyzed by methyltransferase gedG leads to the formation of sulochrin which is further converted to dihydrogeodin by the sulochrin halogenase gedL. Finally, the dihydrogeodin oxidase gedJ catalyzes the stereospecific phenol oxidative coupling reaction converting dihydrogeodin to geodin. In Aspergillus terreus (strain NIH 2624 / FGSC A1156), this protein is O-methyltransferase gedA.